Reading from the N-terminus, the 59-residue chain is Small integral membrane protein 30 (59 aa).

An N-terminal signal peptide occupies residues 1–24 (MTSVSTQLSLVLMSLLLVLPVVEA). The Extracellular segment spans residues 25-29 (VEAGD). Residues 30–50 (AIALLLGVVLSITGICACLGV) traverse the membrane as a helical segment. The Cytoplasmic segment spans residues 51–59 (YARKRNGQM).

In terms of assembly, interacts (via transmembrane domain) with antiviral protein MAVS (via transmembrane domain); the interaction disrupts MAVS interaction with RIGI and inhibits MAVS aggregation, resulting in the repression of type I interferon signaling and innate immune responses.

The protein localises to the endoplasmic reticulum membrane. The protein resides in the mitochondrion membrane. Negatively regulates antiviral innate immune responses. Disrupts the interaction of antiviral protein MAVS with innate immune receptor RIGI and inhibits MAVS aggregation, resulting in the repression of type I interferon signaling and innate immune responses. The polypeptide is Small integral membrane protein 30 (Homo sapiens (Human)).